A 341-amino-acid chain; its full sequence is Flap endonuclease 1 (341 aa).

The N-domain stretch occupies residues 1–98 (MGVQIGELIP…RELEKRREAR (98 aa)). Mg(2+) contacts are provided by Asp27, Asp80, Glu152, Glu154, Asp173, Asp175, and Asp236. The I-domain stretch occupies residues 116-258 (EAKKYAMRAT…KALTIVKRTK (143 aa)). The interaction with PCNA stretch occupies residues 330 to 338 (KQSTLESWF).

This sequence belongs to the XPG/RAD2 endonuclease family. FEN1 subfamily. In terms of assembly, interacts with PCNA. PCNA stimulates the nuclease activity without altering cleavage specificity. It depends on Mg(2+) as a cofactor.

Structure-specific nuclease with 5'-flap endonuclease and 5'-3' exonuclease activities involved in DNA replication and repair. During DNA replication, cleaves the 5'-overhanging flap structure that is generated by displacement synthesis when DNA polymerase encounters the 5'-end of a downstream Okazaki fragment. Binds the unpaired 3'-DNA end and kinks the DNA to facilitate 5' cleavage specificity. Cleaves one nucleotide into the double-stranded DNA from the junction in flap DNA, leaving a nick for ligation. Also involved in the base excision repair (BER) pathway. Acts as a genome stabilization factor that prevents flaps from equilibrating into structures that lead to duplications and deletions. Also possesses 5'-3' exonuclease activity on nicked or gapped double-stranded DNA. The polypeptide is Flap endonuclease 1 (Thermococcus onnurineus (strain NA1)).